Reading from the N-terminus, the 127-residue chain is Small ribosomal subunit protein uS11 (127 aa).

It belongs to the universal ribosomal protein uS11 family. Part of the 30S ribosomal subunit. Interacts with proteins S7 and S18. Binds to IF-3.

Located on the platform of the 30S subunit, it bridges several disparate RNA helices of the 16S rRNA. Forms part of the Shine-Dalgarno cleft in the 70S ribosome. This is Small ribosomal subunit protein uS11 from Rickettsia bellii (strain RML369-C).